Reading from the N-terminus, the 197-residue chain is Putative NADH dehydrogenase/NAD(P)H nitroreductase Lcho_1290 (197 aa).

This sequence belongs to the nitroreductase family. HadB/RutE subfamily. The cofactor is FMN.

The sequence is that of Putative NADH dehydrogenase/NAD(P)H nitroreductase Lcho_1290 from Leptothrix cholodnii (strain ATCC 51168 / LMG 8142 / SP-6) (Leptothrix discophora (strain SP-6)).